The sequence spans 492 residues: ATP synthase subunit beta, chloroplastic (492 aa).

Residue 170–177 (GGAGVGKT) coordinates ATP.

It belongs to the ATPase alpha/beta chains family. In terms of assembly, F-type ATPases have 2 components, CF(1) - the catalytic core - and CF(0) - the membrane proton channel. CF(1) has five subunits: alpha(3), beta(3), gamma(1), delta(1), epsilon(1). CF(0) has four main subunits: a(1), b(1), b'(1) and c(9-12).

Its subcellular location is the plastid. It localises to the chloroplast thylakoid membrane. It carries out the reaction ATP + H2O + 4 H(+)(in) = ADP + phosphate + 5 H(+)(out). Functionally, produces ATP from ADP in the presence of a proton gradient across the membrane. The catalytic sites are hosted primarily by the beta subunits. This is ATP synthase subunit beta, chloroplastic from Pinus thunbergii (Japanese black pine).